The sequence spans 354 residues: G-protein coupled receptor homolog US28 (354 aa).

The Extracellular segment spans residues 1–37 (MTPTTTTAELTTEFDYDEDATPCVFTDVLNQSKPVTL). Residue Asn30 is glycosylated (N-linked (GlcNAc...) asparagine; by host). A helical transmembrane segment spans residues 38–58 (FLYGVVFLFGSIGNFLVIFTI). Residues 59–69 (TWRRRIQCSGD) are Cytoplasmic-facing. The helical transmembrane segment at 70–90 (VYFINLAAADLLFVCTLPLWM) threads the bilayer. The Extracellular portion of the chain corresponds to 91–101 (QYLLDHNSLAS). The helical transmembrane segment at 102–122 (VPCTLLTACFYVAMFASLCFI) threads the bilayer. Residues 123–145 (TEIALDRYYAIVYMRYRPVKQAC) lie on the Cytoplasmic side of the membrane. The helical transmembrane segment at 146-166 (LFSIFWWIFAVIIAIPHFMVV) threads the bilayer. The Extracellular segment spans residues 167–183 (TKKDNQCMTDYDYLEVS). Residues 184–204 (YPIILNVELMLGAFVIPLSVI) traverse the membrane as a helical segment. The Cytoplasmic portion of the chain corresponds to 205–228 (SYCYYRISRIVAVSQSRHKGRIVR). Residues 229–249 (VLIAVVLVFIIFWLPYHLTLF) traverse the membrane as a helical segment. At 250–273 (VDTLKLLKWISSSCEFERSLKRAL) the chain is on the extracellular side. Residues 274–294 (ILTESLAFCHCCLNPLLYVFV) traverse the membrane as a helical segment. Topologically, residues 295–354 (GTKFRQELHCLLAEFRQRLFSRDVSWYHSMSFSRRSSPSRRETSSDTLSDEVCRVSQIIP) are cytoplasmic.

Belongs to the G-protein coupled receptor 1 family. As to quaternary structure, interacts with host GPRASP1; this interaction targets US28 to lysosomes for degradation. Interacts with host CX3CL1/Fractalkine (via N-terminus). Interacts with host Gi alpha-1 subunit GNAI1; this interaction does not lead to the catalytic activation of Gi complex. Phosphorylated. High phosphorylation occurs concomitantly with receptor endocytosis and correlate with low receptor presence at the plasma membrane.

The protein resides in the host cell membrane. Its function is as follows. Binds to a great number of different CC-chemokines including CCL5/RANTES, CCL2/MCP-1, CCL3/MIP-1-alpha as well as CX3CL1/Fractalkine. Transduces signals resulting in the activation of MAP kinase signaling pathways and augmentation of intracellular calcium ion levels, leading to alterations in chemotactic behavior of vascular smooth muscle cells and macrophages. The US28 receptor also exhibits high levels of agonist-independent signaling activity and agonist-independent endocytosis. Interacts with the host Gi complex without activating it, thereby probably interfering with the chemokine-Gi signaling. May also function as a G protein sink to sequester G protein from the cell surface via internalization. Interacts with endogenous Gaq/11 subunits and thereby constitutively activates phospholipase C. This chain is G-protein coupled receptor homolog US28 (US28), found in Homo sapiens (Human).